A 142-amino-acid polypeptide reads, in one-letter code: uncharacterized protein (142 aa).

This is an uncharacterized protein from Gallid herpesvirus 2 (strain GA) (GaHV-2).